A 205-amino-acid chain; its full sequence is Syndecan 4-B (205 aa).

Positions 1 to 17 (MNRLLLLLALVLSGVAA) are cleaved as a signal peptide. The Extracellular segment spans residues 18-162 (ESIRETETMD…FFQRTEVIVA (145 aa)). A disordered region spans residues 26 to 113 (MDPTSMLEYE…HDFDETKTGR (88 aa)). O-linked (Xyl...) (glycosaminoglycan) serine glycans are attached at residues S37, S73, and S75. The span at 44–94 (VFVDEDDDDDYEDGVDYEIDSESDNDEDYSGSGDDDFDDEDNVEDEDEEET) shows a compositional bias: acidic residues. Over residues 102 to 113 (PEHDFDETKTGR) the composition is skewed to basic and acidic residues. The helical transmembrane segment at 163-183 (IIAGTLVGLVVAVSFIVFLVI) threads the bilayer. The Cytoplasmic portion of the chain corresponds to 184 to 205 (RRNQNGDLVKKPIYKKTSTMEV).

This sequence belongs to the syndecan proteoglycan family. In terms of assembly, interacts with the Wnt receptor fzd7 and its signal transducer dvl2/dsh. Post-translationally, O-glycosylated; contains both chondroitin sulfate and heparan sulfate. Ser-37, Ser-73 and Ser-75 can all be modified by either chondroitin sulfate or heparan sulfate, and the protein exists in forms that contain only chondroitin sulfate, only heparan sulfate and both chondroitin sulfate and heparan sulfate. Expressed in the animal hemisphere from the 4-cell to the blastula stage. During gastrulation, expressed in the involuting dorsal mesoderm and ectoderm. After involution, localized mainly to the anterior neuroectoderm. At later stages, expressed in the brain, branchial arches, pronephros, tailbud, and at low levels in the somites.

Its subcellular location is the membrane. Functionally, cell surface proteoglycan. Regulates non-canonical Wnt signaling, being necessary and sufficient for fibronectrin-mediated translocation of dvl2/dsh to the plasma membrane. Required for proper convergent extension movements during gastrulation, which shape the neural plate, and for subsequent neural tube closure. The chain is Syndecan 4-B (sdc4-b) from Xenopus laevis (African clawed frog).